Reading from the N-terminus, the 351-residue chain is Glycerol-1-phosphate dehydrogenase [NAD(P)+] (351 aa).

Residues 93–97 (GKVLD) and 115–118 (TTAS) each bind NAD(+). Asp120 contributes to the substrate binding site. Ser124 is a binding site for NAD(+). A substrate-binding site is contributed by Asp167. Asp167 and His247 together coordinate Zn(2+). His251 contributes to the substrate binding site. His263 serves as a coordination point for Zn(2+).

This sequence belongs to the glycerol-1-phosphate dehydrogenase family. Zn(2+) is required as a cofactor.

It is found in the cytoplasm. It catalyses the reaction sn-glycerol 1-phosphate + NAD(+) = dihydroxyacetone phosphate + NADH + H(+). The enzyme catalyses sn-glycerol 1-phosphate + NADP(+) = dihydroxyacetone phosphate + NADPH + H(+). Its pathway is membrane lipid metabolism; glycerophospholipid metabolism. Catalyzes the NAD(P)H-dependent reduction of dihydroxyacetonephosphate (DHAP or glycerone phosphate) to glycerol 1-phosphate (G1P). The G1P thus generated is used as the glycerophosphate backbone of phospholipids in the cellular membranes of Archaea. The chain is Glycerol-1-phosphate dehydrogenase [NAD(P)+] from Archaeoglobus fulgidus (strain ATCC 49558 / DSM 4304 / JCM 9628 / NBRC 100126 / VC-16).